A 1156-amino-acid polypeptide reads, in one-letter code: MASLLPLLCLCVVAAHLAGARDATPTEEPMATALGLERRSVYTGQPSPALEDWEEASEWTSWFNVDHPGGDGDFESLAAIRFYYGPARVCPRPLALEARTTDWALPSAVGERVHLNPTRGFWCLNREQPRGRRCSNYHVRFRCPLEASWGAWGPWGPCSGSCGPGRRLRRRHCPSPAGDACPGRPLEAQKCVRPRCPGCSLDTCECPDHILLGSVVTPSGQPLLGARVSLRDQPGTVATSDAHGTFRVPGVCADSRANIRAQMDGFSAGEAQAQANGSISVVTIILDKLEKPYLVKHPESRVREAGQNVTFCCKASGTPMPKKYSWFHNGTLLDRRAHGYGAHLELRGLRPDQAGIYHCKAWNEAGAVRSGTARLTVLAPGQPACDPRPREYLIKLPEDCGQPGSGPAYLDVGLCPDTRCPSLAGSSPRCGDASSRCCSVRRLERREIHCPGYVLPVKVVAECGCQKCLPPRGLVRGRVVAADSGEPLRFARILLGQEPIGFTAYQGDFTIEVPPSTQRLVVTFVDPSGEFMDAVRVLPFDPRGAGVYHEVKAMRKKAPVILHTSQSNTIPLGELEDEAPLGELVLPSGAFRRADGKPYSGPVEARVTFVDPRDLTSAASAPSDLRFVDSDGELAPLRTYGMFSVDLRAPGSAEQLQVGPVAVRVAASQIHMPGHVEALKLWSLNPETGLWEEESGFRREGSSGPRVRREERVFLVGNVEIRERRLFNLDVPERRRCFVKVRAYANDKFTPSEQVEGVVVTLVNLEPAPGFSANPRAWGRFDSAVTGPNGACLPAFCDADRPDAYTALVTATLGGEELEPAPSLPRPLPATVGVTQPYLDRLGYRRTDHDDPAFKRNGFRINLAKPRPGDPAEANGPVYPWRSLRECQGAPVTASHFRFARVEADKYEYNVVPFREGTPASWTGDLLAWWPNPQEFRACFLKVKIQGPQEYMVRSHNAGGSHPRTRGQLYGLRDARSVRDPERPGTSAACVEFKCSGMLFDQRQVDRTLVTIMPQGSCRRVAVNGLLRDYLTRHPPPVPAEDPAAFSMLAPLDPLGHNYGVYTVTDQSPRLAKEIAIGRCFDGSSDGFSREMKADAGTAVTFQCREPPAGRPSLFQRLLESPATALGDIRREMSEAAQAQARASGPLRTRRGRVRQ.

A signal peptide spans 1 to 20 (MASLLPLLCLCVVAAHLAGA). The TSP type-1 domain occupies 146 to 197 (EASWGAWGPWGPCSGSCGPGRRLRRRHCPSPAGDACPGRPLEAQKCVRPRCP). 3 cysteine pairs are disulfide-bonded: cysteine 158–cysteine 191, cysteine 162–cysteine 196, and cysteine 173–cysteine 181. Residues asparagine 276, asparagine 308, and asparagine 329 are each glycosylated (N-linked (GlcNAc...) asparagine). The Ig-like C2-type domain maps to 292–376 (PYLVKHPESR…AVRSGTARLT (85 aa)). A disulfide bridge connects residues cysteine 313 and cysteine 359. Residues 1134-1156 (SEAAQAQARASGPLRTRRGRVRQ) are disordered.

In terms of processing, may be cleaved into 2 chains possibly by a furin-like protease upon or preceding secretion. In terms of tissue distribution, expressed in articular chondrocytes but not in knee meniscal cartilage cells. Localizes to the intermediate to deep zone of articular cartilage.

Its subcellular location is the secreted. It is found in the extracellular space. The protein localises to the extracellular matrix. Functionally, may play a role in cartilage scaffolding. This Homo sapiens (Human) protein is Cartilage intermediate layer protein 2 (CILP2).